Here is a 655-residue protein sequence, read N- to C-terminus: DNA mismatch repair protein MutL (655 aa).

Disordered regions lie at residues 357–416 and 439–460; these read EKKQ…DDYT and DFDS…SKDP. The span at 371 to 383 shows a compositional bias: basic and acidic residues; sequence SHEEDEKNDDKAY. Residues 402-416 are compositionally biased toward polar residues; the sequence is NTSVSTSPNSDDDYT.

The protein belongs to the DNA mismatch repair MutL/HexB family.

Its function is as follows. This protein is involved in the repair of mismatches in DNA. It is required for dam-dependent methyl-directed DNA mismatch repair. May act as a 'molecular matchmaker', a protein that promotes the formation of a stable complex between two or more DNA-binding proteins in an ATP-dependent manner without itself being part of a final effector complex. The protein is DNA mismatch repair protein MutL of Staphylococcus saprophyticus subsp. saprophyticus (strain ATCC 15305 / DSM 20229 / NCIMB 8711 / NCTC 7292 / S-41).